A 196-amino-acid polypeptide reads, in one-letter code: Ribonuclease H (196 aa).

Residues 58 to 196 (LAKEEIIWES…GEIKADYGRK (139 aa)) enclose the RNase H type-1 domain. Mg(2+)-binding residues include Asp-71, Glu-109, Asp-132, and Asp-192.

It belongs to the RNase H family. The cofactor is Mn(2+). Mg(2+) serves as cofactor.

The protein localises to the cytoplasm. It catalyses the reaction Endonucleolytic cleavage to 5'-phosphomonoester.. In terms of biological role, endonuclease that specifically degrades the RNA of RNA-DNA hybrids. The protein is Ribonuclease H (rnhA) of Halalkalibacterium halodurans (strain ATCC BAA-125 / DSM 18197 / FERM 7344 / JCM 9153 / C-125) (Bacillus halodurans).